Consider the following 342-residue polypeptide: N-acetyl-gamma-glutamyl-phosphate reductase (342 aa).

Cys148 is a catalytic residue.

It belongs to the NAGSA dehydrogenase family. Type 1 subfamily.

It localises to the cytoplasm. The catalysed reaction is N-acetyl-L-glutamate 5-semialdehyde + phosphate + NADP(+) = N-acetyl-L-glutamyl 5-phosphate + NADPH + H(+). The protein operates within amino-acid biosynthesis; L-arginine biosynthesis; N(2)-acetyl-L-ornithine from L-glutamate: step 3/4. In terms of biological role, catalyzes the NADPH-dependent reduction of N-acetyl-5-glutamyl phosphate to yield N-acetyl-L-glutamate 5-semialdehyde. The protein is N-acetyl-gamma-glutamyl-phosphate reductase of Methanococcus vannielii (strain ATCC 35089 / DSM 1224 / JCM 13029 / OCM 148 / SB).